A 171-amino-acid polypeptide reads, in one-letter code: uncharacterized protein (171 aa).

The tract at residues 139 to 171 (ARKPTKSDDEEEEVGKMGGISSSINSWVQRQKL) is disordered. Residues 158 to 171 (ISSSINSWVQRQKL) are compositionally biased toward polar residues.

This is an uncharacterized protein from Caenorhabditis elegans.